Consider the following 1263-residue polypeptide: Multidrug resistance protein sirA (1263 aa).

The segment at 1–21 is disordered; sequence MAEPESEKPSSAQGGGLPSSD. The next 4 membrane-spanning stretches (helical) occupy residues 57 to 77, 104 to 124, 179 to 199, and 206 to 226; these read LISA…ILFI, IALY…IFTN, KIGL…IGFV, and FILT…SGFM. An ABC transmembrane type-1 1 domain is found at 57-347; the sequence is LISAFFAAVS…VGPHLQAMSL (291 aa). A glycan (N-linked (GlcNAc...) asparagine) is linked at Asn232. A run of 2 helical transmembrane segments spans residues 284–304 and 318–338; these read VMGW…GLAI and VGAI…FGNV. An ABC transporter 1 domain is found at 380 to 625; it reads IEFRNVSHVY…EGLYQTFVRR (246 aa). A glycan (N-linked (GlcNAc...) asparagine) is linked at Asn384. Position 415-422 (415-422) interacts with ATP; sequence GASGSGKS. Residue Asn469 is glycosylated (N-linked (GlcNAc...) asparagine). The disordered stretch occupies residues 635-672; sequence PPHARITPAVDTPASPQHRLSEKTGSIYGQGESEAADK. Transmembrane regions (helical) follow at residues 699 to 719, 740 to 760, 817 to 839, 843 to 865, 930 to 950, and 960 to 980; these read VTGI…SVFF, FWAA…GVQG, VFLG…SLAV, LTLV…LKLV, LSEA…ATLV, and FFIV…VFAF. In terms of domain architecture, ABC transmembrane type-1 2 spans 699–986; sequence VTGIASAVIS…VFAFAPDFGK (288 aa). In terms of domain architecture, ABC transporter 2 spans 1021-1259; it reads VDVSNVVFYY…RGSYYDSVNL (239 aa). Position 1056–1063 (1056–1063) interacts with ATP; it reads GGSGSGKS.

It belongs to the ABC transporter superfamily. ABCB family. Multidrug resistance exporter (TC 3.A.1.201) subfamily.

It localises to the cell membrane. It catalyses the reaction ATP + H2O + xenobioticSide 1 = ADP + phosphate + xenobioticSide 2.. Sirodesmin transporter that provides the dual role of sirodesmin export and self-protection. Also provides tolerance to gliotoxin. This Leptosphaeria maculans (Blackleg fungus) protein is Multidrug resistance protein sirA.